The primary structure comprises 211 residues: Uracil phosphoribosyltransferase (211 aa).

5-phospho-alpha-D-ribose 1-diphosphate contacts are provided by residues arginine 77, arginine 102, and 129 to 137; that span reads DPMLATGGS. Residues isoleucine 192 and 197–199 contribute to the uracil site; that span reads GDA. 5-phospho-alpha-D-ribose 1-diphosphate is bound at residue aspartate 198.

Belongs to the UPRTase family. Requires Mg(2+) as cofactor.

The enzyme catalyses UMP + diphosphate = 5-phospho-alpha-D-ribose 1-diphosphate + uracil. Its pathway is pyrimidine metabolism; UMP biosynthesis via salvage pathway; UMP from uracil: step 1/1. Its activity is regulated as follows. Allosterically activated by GTP. Its function is as follows. Catalyzes the conversion of uracil and 5-phospho-alpha-D-ribose 1-diphosphate (PRPP) to UMP and diphosphate. The polypeptide is Uracil phosphoribosyltransferase (Corynebacterium efficiens (strain DSM 44549 / YS-314 / AJ 12310 / JCM 11189 / NBRC 100395)).